The chain runs to 93 residues: YcgL domain-containing protein KPN78578_22820 (93 aa).

The YcgL domain occupies 1–85 (MFCVIYRSTK…PSENLLKKHL (85 aa)).

The sequence is that of YcgL domain-containing protein KPN78578_22820 from Klebsiella pneumoniae subsp. pneumoniae (strain ATCC 700721 / MGH 78578).